The following is a 698-amino-acid chain: Elongation factor G (698 aa).

A tr-type G domain is found at 8-290 (ERYRNIGISA…AVIELLPSPV (283 aa)). GTP contacts are provided by residues 17–24 (AHIDAGKT), 88–92 (DTPGH), and 142–145 (NKMD).

The protein belongs to the TRAFAC class translation factor GTPase superfamily. Classic translation factor GTPase family. EF-G/EF-2 subfamily.

It localises to the cytoplasm. Catalyzes the GTP-dependent ribosomal translocation step during translation elongation. During this step, the ribosome changes from the pre-translocational (PRE) to the post-translocational (POST) state as the newly formed A-site-bound peptidyl-tRNA and P-site-bound deacylated tRNA move to the P and E sites, respectively. Catalyzes the coordinated movement of the two tRNA molecules, the mRNA and conformational changes in the ribosome. The chain is Elongation factor G from Aromatoleum aromaticum (strain DSM 19018 / LMG 30748 / EbN1) (Azoarcus sp. (strain EbN1)).